We begin with the raw amino-acid sequence, 65 residues long: Putative antitoxin VapB7 (65 aa).

It belongs to the UPF0165 family.

Possibly the antitoxin component of a type II toxin-antitoxin (TA) system. Its cognate toxin is VapC7 (Potential). This chain is Putative antitoxin VapB7 (vapB7), found in Archaeoglobus fulgidus (strain ATCC 49558 / DSM 4304 / JCM 9628 / NBRC 100126 / VC-16).